Here is a 255-residue protein sequence, read N- to C-terminus: F-box only protein 44 (255 aa).

The region spanning 3–50 (VGNINELPENILLELFIHIPARQLLLRCRPVCSLWRDLIDLVTLWKRK) is the F-box domain. Residues 71 to 252 (FYFLRSLQRN…VTNSSITIGP (182 aa)) form the FBA domain.

As to quaternary structure, part of a SCF (SKP1-cullin-F-box) protein ligase complex. Interacts with SKP1 and CUL1. Expressed in brain, liver, pancreas and adipose tissue (at protein level). Widely expressed.

Functionally, substrate-recognition component of the SCF (SKP1-CUL1-F-box protein)-type E3 ubiquitin ligase complex. This is F-box only protein 44 (Fbxo44) from Mus musculus (Mouse).